Consider the following 144-residue polypeptide: MSTHIQRSALLPYPARALFDLVNDVKRYPEFLPWCSASQVLEESESLMRAELTVAKGSLSQRFTTRNVLVPGASIEMNLENGPFTELHGVWQFKALGEKACKITLDLTFDYAGPLVKATLGPLFTQAANTMVDAFCQRAKQLYG.

Belongs to the ribosome association toxin RatA family.

In terms of biological role, toxic component of a type II toxin-antitoxin (TA) system. Binds to 50S ribosomal subunits, preventing them from associating with 30S subunits to form 70S ribosomes. Its antitoxin is unknown. This is Ribosome association toxin RatA (ratA) from Pseudomonas aeruginosa (strain ATCC 15692 / DSM 22644 / CIP 104116 / JCM 14847 / LMG 12228 / 1C / PRS 101 / PAO1).